The chain runs to 528 residues: Calcium-dependent protein kinase 13 (528 aa).

The N-myristoyl glycine moiety is linked to residue G2. Residues 17–32 are compositionally biased toward basic and acidic residues; the sequence is KSNYSGHDHARKDAAG. The segment at 17–37 is disordered; it reads KSNYSGHDHARKDAAGGKKSA. A Phosphoserine modification is found at S43. In terms of domain architecture, Protein kinase spans 54-312; that stretch reads YLLDRELGRG…AKQVLEHPWI (259 aa). ATP is bound by residues 60 to 68 and K83; that span reads LGRGEFGVT. D178 (proton acceptor) is an active-site residue. S218 is subject to Phosphoserine. Residues 318–348 form an autoinhibitory domain region; it reads APNVPLGDVVKSRLKQFSVMNRFKRKALRVI. EF-hand domains lie at 355–390, 391–426, 427–462, and 463–498; these read EEVE…FSTQ, LAES…LQKV, ANDE…DGGD, and DCVD…GTDW. Positions 368, 370, 372, 379, 404, 410, 415, 440, 442, 444, 446, 451, 476, 478, 480, and 482 each coordinate Ca(2+). S484 carries the post-translational modification Phosphoserine. A Ca(2+)-binding site is contributed by E487. Residue S522 is modified to Phosphoserine.

Belongs to the protein kinase superfamily. Ser/Thr protein kinase family. CDPK subfamily.

Its subcellular location is the cell membrane. It carries out the reaction L-seryl-[protein] + ATP = O-phospho-L-seryl-[protein] + ADP + H(+). The enzyme catalyses L-threonyl-[protein] + ATP = O-phospho-L-threonyl-[protein] + ADP + H(+). Its activity is regulated as follows. Activated by calcium. Autophosphorylation may play an important role in the regulation of the kinase activity. In terms of biological role, may play a role in signal transduction pathways that involve calcium as a second messenger. The sequence is that of Calcium-dependent protein kinase 13 (CPK13) from Arabidopsis thaliana (Mouse-ear cress).